Here is a 328-residue protein sequence, read N- to C-terminus: Transcription factor bHLH84 (328 aa).

The disordered stretch occupies residues 145–248 (QCESSKKRTR…ASRGAATDPQ (104 aa)). Positions 220-229 (LSKEDGEDSK) are enriched in basic and acidic residues. Residues 243-292 (AATDPQSLYARKRRERINERLRILQHLVPNGTKVDISTMLEEAVQYVKFL) form the bHLH domain.

The protein belongs to the bHLH protein family. As to quaternary structure, homodimer.

Its subcellular location is the nucleus. The polypeptide is Transcription factor bHLH84 (BHLH84) (Arabidopsis thaliana (Mouse-ear cress)).